Reading from the N-terminus, the 690-residue chain is Heterogeneous nuclear ribonucleoprotein M (690 aa).

A compositionally biased stretch (low complexity) spans 1-13 (MAAGVEAAAEVAA). The disordered stretch occupies residues 1-63 (MAAGVEAAAE…KRGGNRFEPY (63 aa)). Position 2 is an N-acetylalanine (Ala-2). Residue Lys-17 forms a Glycyl lysine isopeptide (Lys-Gly) (interchain with G-Cter in SUMO2) linkage. The residue at position 29 (Ser-29) is a Phosphoserine. Residues Lys-37, Lys-68, and Lys-82 each participate in a glycyl lysine isopeptide (Lys-Gly) (interchain with G-Cter in SUMO2) cross-link. A compositionally biased stretch (basic and acidic residues) spans 37 to 49 (KGEERPTQNEKRK). RRM domains lie at 70-148 (YRAF…EDPD) and 164-241 (STVF…MDER). A Phosphoserine modification is found at Ser-85. Residues Lys-87 and Lys-126 each participate in a glycyl lysine isopeptide (Lys-Gly) (interchain with G-Cter in SUMO2) cross-link. Lys-133 carries the N6-acetyllysine; alternate modification. Lys-133 participates in a covalent cross-link: Glycyl lysine isopeptide (Lys-Gly) (interchain with G-Cter in SUMO2); alternate. Glycyl lysine isopeptide (Lys-Gly) (interchain with G-Cter in SUMO2) cross-links involve residues Lys-142 and Lys-144. Ser-164 bears the Phosphoserine mark. Residue Lys-181 forms a Glycyl lysine isopeptide (Lys-Gly) (interchain with G-Cter in SUMO2) linkage. N6-acetyllysine; alternate is present on Lys-237. Lys-237 participates in a covalent cross-link: Glycyl lysine isopeptide (Lys-Gly) (interchain with G-Cter in SUMO2); alternate. Residues Lys-245 and Lys-305 each participate in a glycyl lysine isopeptide (Lys-Gly) (interchain with G-Cter in SUMO2) cross-link. Ser-325 and Ser-337 each carry phosphoserine. Glycyl lysine isopeptide (Lys-Gly) (interchain with G-Cter in SUMO2) cross-links involve residues Lys-341 and Lys-348. Ser-357 carries the post-translational modification Phosphoserine. Tandem repeats lie at residues 360–365 (GIERMG), 367–372 (GIDRIS), 375–380 (GMERMG), and 386–391 (GMDRVG). Positions 360-568 (GIERMGPGID…ALGAGIERMG (209 aa)) are 27 X 6 AA repeats of [GEVSTPAN]-[ILMV]-[DE]-[RH]-[MLVI]-[GAV]. At Ser-392 the chain carries Phosphoserine. 3 consecutive repeat copies span residues 393-398 (EIERMG), 400-405 (VMDRMG), and 406-411 (SVERMG). A Phosphoserine modification is found at Ser-412. A run of 4 repeats spans residues 413-418 (GIERMG), 421-426 (GLDHMA), 428-433 (SIERMG), and 435-440 (TMERIG). A Phosphoserine modification is found at Ser-428. Position 441 is a phosphoserine (Ser-441). A run of 16 repeats spans residues 442–447 (GVERMG), 453–458 (GLERMA), 460–465 (PIDRVG), 467–472 (TIERMG), 474–479 (GVERMG), 481–486 (AIERMG), 488–493 (SMDRMV), 500–505 (GLERMG), 507–512 (VMDRMA), 514–519 (GLERMG), 522–527 (NLERMG), 528–532 (LERMG), 535–540 (SLERMG), 541–545 (LERMG), 548–553 (SLERMG), and 563–568 (GIERMG). Arg-456 bears the Omega-N-methylarginine mark. At Ser-488 the chain carries Phosphoserine. Ser-535 is subject to Phosphoserine. Ser-548 carries the post-translational modification Phosphoserine. Residues Ser-578, Ser-593, and Ser-597 each carry the phosphoserine modification. A Glycyl lysine isopeptide (Lys-Gly) (interchain with G-Cter in SUMO2) cross-link involves residue Lys-611. Residues 613 to 689 (CQIFVRNLPF…REIDVRIDRN (77 aa)) enclose the RRM 3 domain. Position 625 is a phosphothreonine (Thr-625). Lys-627 is covalently cross-linked (Glycyl lysine isopeptide (Lys-Gly) (interchain with G-Cter in SUMO2)). An N6-acetyllysine modification is found at Lys-632. Glycyl lysine isopeptide (Lys-Gly) (interchain with G-Cter in SUMO2) cross-links involve residues Lys-645 and Lys-652. N6-acetyllysine; alternate is present on Lys-658. Lys-658 participates in a covalent cross-link: Glycyl lysine isopeptide (Lys-Gly) (interchain with G-Cter in SUMO2); alternate. Lys-658 participates in a covalent cross-link: Glycyl lysine isopeptide (Lys-Gly) (interchain with G-Cter in SUMO1); alternate. Residue Ser-661 is modified to Phosphoserine. Residue Lys-676 forms a Glycyl lysine isopeptide (Lys-Gly) (interchain with G-Cter in SUMO2) linkage.

Identified in the spliceosome C complex. Interacts with PPIA/CYPA. Post-translationally, sumoylated. Expressed in all tissues tested, including liver, heart, lung, skeletal muscle, kidney, stomach, large intestine, small intestine, pancreas, spleen, peritoneal macrophage and thyroid.

The protein localises to the nucleus matrix. Pre-mRNA binding protein, binds avidly to poly(G) and poly(U) RNA homopolymers. Involved in splicing. Acts as a receptor for carcinoembryonic antigen in Kupffer cells, may initiate a series of signaling events leading to tyrosine phosphorylation of proteins and induction of IL-1 alpha, IL-6, IL-10 and tumor necrosis factor alpha cytokines. This is Heterogeneous nuclear ribonucleoprotein M (Hnrnpm) from Rattus norvegicus (Rat).